The sequence spans 511 residues: Putative polyol transporter 2 (511 aa).

The next 12 helical transmembrane spans lie at 25 to 45 (FAFA…YDIG), 63 to 83 (VQLE…SGAA), 94 to 114 (YTIV…GFAT), 117 to 137 (PFIM…MMIA), 156 to 176 (FPEI…YFFA), 186 to 206 (FMLG…LAMP), 284 to 304 (ILIA…DAVV), 324 to 344 (LATV…TCLV), 351 to 371 (ALLL…GTSL), 384 to 404 (WAIG…SLGA), 424 to 444 (GASL…MTFL), and 454 to 474 (GAFL…FTFL).

The protein belongs to the major facilitator superfamily. Sugar transporter (TC 2.A.1.1) family.

The protein resides in the membrane. Functionally, plasma membrane sugar-proton symporter. The sequence is that of Putative polyol transporter 2 (PLT2) from Arabidopsis thaliana (Mouse-ear cress).